The chain runs to 489 residues: Betaine aldehyde dehydrogenase (489 aa).

Positions 26 and 93 each coordinate K(+). NAD(+) is bound at residue 150 to 152; the sequence is GAW. The active-site Charge relay system is K162. Residue 176–179 participates in NAD(+) binding; that stretch reads KPSE. V180 is a binding site for K(+). 229–232 contributes to the NAD(+) binding site; that stretch reads GVET. Residue L245 participates in K(+) binding. The active-site Proton acceptor is E251. NAD(+)-binding residues include G253, C285, and E386. C285 acts as the Nucleophile in catalysis. Residue C285 is modified to Cysteine sulfenic acid (-SOH). Positions 456 and 459 each coordinate K(+). The active-site Charge relay system is E463.

Belongs to the aldehyde dehydrogenase family. In terms of assembly, dimer of dimers. Requires K(+) as cofactor.

The enzyme catalyses betaine aldehyde + NAD(+) + H2O = glycine betaine + NADH + 2 H(+). It functions in the pathway amine and polyamine biosynthesis; betaine biosynthesis via choline pathway; betaine from betaine aldehyde: step 1/1. Its function is as follows. Involved in the biosynthesis of the osmoprotectant glycine betaine. Catalyzes the irreversible oxidation of betaine aldehyde to the corresponding acid. The protein is Betaine aldehyde dehydrogenase of Burkholderia orbicola (strain AU 1054).